The chain runs to 297 residues: 4-hydroxy-tetrahydrodipicolinate synthase (297 aa).

A pyruvate-binding site is contributed by T47. The active-site Proton donor/acceptor is Y136. Catalysis depends on K165, which acts as the Schiff-base intermediate with substrate. Pyruvate is bound at residue I206.

The protein belongs to the DapA family. Homotetramer; dimer of dimers.

The protein localises to the cytoplasm. The enzyme catalyses L-aspartate 4-semialdehyde + pyruvate = (2S,4S)-4-hydroxy-2,3,4,5-tetrahydrodipicolinate + H2O + H(+). Its pathway is amino-acid biosynthesis; L-lysine biosynthesis via DAP pathway; (S)-tetrahydrodipicolinate from L-aspartate: step 3/4. Its function is as follows. Catalyzes the condensation of (S)-aspartate-beta-semialdehyde [(S)-ASA] and pyruvate to 4-hydroxy-tetrahydrodipicolinate (HTPA). The protein is 4-hydroxy-tetrahydrodipicolinate synthase of Campylobacter concisus (strain 13826).